The following is a 185-amino-acid chain: Elongation factor P (185 aa).

The protein belongs to the elongation factor P family.

Its subcellular location is the cytoplasm. The protein operates within protein biosynthesis; polypeptide chain elongation. Its function is as follows. Involved in peptide bond synthesis. Stimulates efficient translation and peptide-bond synthesis on native or reconstituted 70S ribosomes in vitro. Probably functions indirectly by altering the affinity of the ribosome for aminoacyl-tRNA, thus increasing their reactivity as acceptors for peptidyl transferase. This is Elongation factor P from Bacillus mycoides (strain KBAB4) (Bacillus weihenstephanensis).